Here is a 643-residue protein sequence, read N- to C-terminus: Clathrin interactor 1 (643 aa).

An ENTH domain is found at 16 to 149; it reads NVVMNYSEIE…QDDDRLREER (134 aa). Residue Arg29 coordinates a 1,2-diacyl-sn-glycero-3-phospho-(1D-myo-inositol-4,5-bisphosphate). Residues 52 to 54 form an interaction with VTI1B region; sequence FMY. Arg67 contacts a 1,2-diacyl-sn-glycero-3-phospho-(1D-myo-inositol-4,5-bisphosphate). 2 interaction with VTI1B regions span residues 94–96 and 142–153; these read SER and DDRLREERKKAK. Phosphoserine occurs at positions 163, 166, 173, 205, 210, 227, 245, and 299. The disordered stretch occupies residues 219-331; the sequence is FRRKDREDSP…SSGDLVDLFD (113 aa). The segment covering 222–239 has biased composition (basic and acidic residues); sequence KDREDSPERCSDSDEEKK. The span at 300–310 shows a compositional bias: polar residues; the sequence is PDQNASTHTPQ. At Thr308 the chain carries Phosphothreonine. Residues 311 to 323 are compositionally biased toward low complexity; the sequence is SSLKTSVPSSKSS. 2 positions are modified to phosphoserine: Ser312 and Ser642.

Belongs to the epsin family. As to quaternary structure, binds clathrin heavy chain and AP-2. Interacts with VTI1B. Interacts with GGA2 (via GAE domain). Interacts with AP1G1 (via GAE domain). Interacts with AP1G2 (via GAE domain).

It localises to the cytoplasm. The protein localises to the perinuclear region. Its subcellular location is the membrane. The protein resides in the cytoplasmic vesicle. It is found in the clathrin-coated vesicle. Functionally, binds to membranes enriched in phosphatidylinositol 4,5-bisphosphate (PtdIns(4,5)P2). May have a role in transport via clathrin-coated vesicles from the trans-Golgi network to endosomes. Stimulates clathrin assembly. In Bos taurus (Bovine), this protein is Clathrin interactor 1 (CLINT1).